Reading from the N-terminus, the 179-residue chain is Large ribosomal subunit protein uL5 (179 aa).

Belongs to the universal ribosomal protein uL5 family. In terms of assembly, part of the 50S ribosomal subunit; part of the 5S rRNA/L5/L18/L25 subcomplex. Contacts the 5S rRNA and the P site tRNA. Forms a bridge to the 30S subunit in the 70S ribosome.

This is one of the proteins that bind and probably mediate the attachment of the 5S RNA into the large ribosomal subunit, where it forms part of the central protuberance. In the 70S ribosome it contacts protein S13 of the 30S subunit (bridge B1b), connecting the 2 subunits; this bridge is implicated in subunit movement. Contacts the P site tRNA; the 5S rRNA and some of its associated proteins might help stabilize positioning of ribosome-bound tRNAs. The chain is Large ribosomal subunit protein uL5 from Bacillus cereus (strain Q1).